A 333-amino-acid polypeptide reads, in one-letter code: Protoheme IX farnesyltransferase (333 aa).

A compositionally biased stretch (low complexity) spans 1–13 (MVSSTSQIISTSP). Residues 1–21 (MVSSTSQIISTSPSRDDVVPS) are disordered. 8 helical membrane-spanning segments follow: residues 38-58 (LIPL…GWPL), 63-83 (LACT…LNCL), 109-129 (AVFT…VSGV), 132-152 (LAAG…TAFL), 160-180 (IVIG…AATG), 188-208 (WLFA…AILL), 245-265 (CFGV…LVPF), and 286-306 (AKGL…LLVV).

The protein belongs to the UbiA prenyltransferase family. Protoheme IX farnesyltransferase subfamily.

The protein localises to the cell inner membrane. The enzyme catalyses heme b + (2E,6E)-farnesyl diphosphate + H2O = Fe(II)-heme o + diphosphate. Its pathway is porphyrin-containing compound metabolism; heme O biosynthesis; heme O from protoheme: step 1/1. Its function is as follows. Converts heme B (protoheme IX) to heme O by substitution of the vinyl group on carbon 2 of heme B porphyrin ring with a hydroxyethyl farnesyl side group. The polypeptide is Protoheme IX farnesyltransferase (Prochlorococcus marinus (strain SARG / CCMP1375 / SS120)).